The primary structure comprises 396 residues: MTKSEKIIELTNHYGAHNYLPLPIVISEAEGVWVKDPEGNKYMDMLSAYSAVNQGHRHPKIIQALKDQADKVTLVSRAFHSDNLGEWYEKICKLAGKDKALPMNTGAEAVETALKAARRWAYDVKGIEPNKAEIIAFNGNFHGRTMAPVSLSSEAEYQRGYGPLLDGFRKVDFGDVDALKAAINKNTAAVLVEPIQGEAGINIPPEGYLKAIRELCDEHNVLFIADEIQAGLGRSGKLFARDWDNVKPDVYILGKALGGGVFPISVVLADKEVLDVFTPGSHGSTFGGNPLACAASIAALDVIVDEDLPGRSLELGDYFKEQLKQIDHPSIKEVRGRGLFIGVELNESARPYCEALKEEGLLCKETHDTVIRFAPPLIITKEELDLALEKIRHVFQ.

Position 255 is an N6-(pyridoxal phosphate)lysine (lysine 255).

It belongs to the class-III pyridoxal-phosphate-dependent aminotransferase family. OAT subfamily. Pyridoxal 5'-phosphate is required as a cofactor.

The protein localises to the cytoplasm. The enzyme catalyses a 2-oxocarboxylate + L-ornithine = L-glutamate 5-semialdehyde + an L-alpha-amino acid. It functions in the pathway amino-acid biosynthesis; L-proline biosynthesis; L-glutamate 5-semialdehyde from L-ornithine: step 1/1. Catalyzes the interconversion of ornithine to glutamate semialdehyde. In Staphylococcus aureus (strain MRSA252), this protein is Ornithine aminotransferase 2.